Reading from the N-terminus, the 458-residue chain is UPF0210 protein Maeo_1412 (458 aa).

It belongs to the UPF0210 family.

This Methanococcus aeolicus (strain ATCC BAA-1280 / DSM 17508 / OCM 812 / Nankai-3) protein is UPF0210 protein Maeo_1412.